The chain runs to 1154 residues: PDZ domain-containing protein 8 (1154 aa).

Residues 2–24 (GLLLMILASAVLGSFLTLLAQFF) form a helical membrane-spanning segment. Positions 66–90 (DEEPSGAAPEGGATPTAAPETPAPP) are disordered. The segment covering 70 to 85 (SGAAPEGGATPTAAPE) has biased composition (low complexity). In terms of domain architecture, SMP-LTD spans 91–294 (TRETCYFLNA…LPNYKIRFKP (204 aa)). Residues 366–449 (TVELIKGNLQ…RVLVYYERPV (84 aa)) enclose the PDZ domain. Phosphoserine is present on residues serine 496, serine 521, and serine 538. The segment at 548–612 (GSHPLPPKIQ…SADAPNQAEP (65 aa)) is disordered. The Phorbol-ester/DAG-type zinc finger occupies 840 to 891 (KHSFQDTQFQNPTWCDYCKKKVWTKAASQCMFCAYVCHKKCQEKCLAETSVC). The tract at residues 955 to 999 (RLSEPGTDLVEPSPKHTPNTSDNEGSDTEVCGPNSPSKRGNSTGI) is disordered. Serine 967 and serine 980 each carry phosphoserine. Over residues 988 to 998 (NSPSKRGNSTG) the composition is skewed to polar residues. Positions 1028 to 1063 (PTEERIQKLEFMLDKLQNEIDQELEHNNSLVREEKE) form a coiled coil. Positions 1132–1144 (SQLIDSQPFSSIS) are enriched in polar residues. A disordered region spans residues 1132-1154 (SQLIDSQPFSSISDDLFGPSESV).

Interacts with MSN. In terms of assembly, (Microbial infection) Interacts with HIV-1 Gag polyprotein p55.

Its subcellular location is the endoplasmic reticulum membrane. In terms of biological role, molecular tethering protein that connects endoplasmic reticulum and mitochondria membranes. PDZD8-dependent endoplasmic reticulum-mitochondria membrane tethering is essential for endoplasmic reticulum-mitochondria Ca(2+) transfer. In neurons, involved in the regulation of dendritic Ca(2+) dynamics by regulating mitochondrial Ca(2+) uptake in neurons. Plays an indirect role in the regulation of cell morphology and cytoskeletal organization. May inhibit herpes simplex virus 1 infection at an early stage. The polypeptide is PDZ domain-containing protein 8 (Homo sapiens (Human)).